Consider the following 326-residue polypeptide: Transcription initiation factor IIB (326 aa).

The segment at 26–57 (DVEVCPECGSPRLIRDYRRGEFICQDCGLVIE) adopts a TFIIB-type zinc-finger fold. Cysteine 30, cysteine 33, cysteine 49, and cysteine 52 together coordinate Zn(2+). Repeat copies occupy residues 143–226 (SELD…TREL) and 237–318 (DYIP…ELAE).

Belongs to the TFIIB family.

Its function is as follows. Stabilizes TBP binding to an archaeal box-A promoter. Also responsible for recruiting RNA polymerase II to the pre-initiation complex (DNA-TBP-TFIIB). This chain is Transcription initiation factor IIB, found in Archaeoglobus fulgidus (strain ATCC 49558 / DSM 4304 / JCM 9628 / NBRC 100126 / VC-16).